The primary structure comprises 668 residues: DNA ligase (668 aa).

NAD(+) is bound by residues 34–38 (DAEYD), 83–84 (SL), and glutamate 113. Lysine 115 (N6-AMP-lysine intermediate) is an active-site residue. The NAD(+) site is built by arginine 136, glutamate 170, lysine 286, and lysine 310. Zn(2+) is bound by residues cysteine 404, cysteine 407, cysteine 422, and cysteine 427. The 79-residue stretch at 590-668 (DSDSYFAGKT…EEQLMGELKK (79 aa)) folds into the BRCT domain.

It belongs to the NAD-dependent DNA ligase family. LigA subfamily. Requires Mg(2+) as cofactor. Mn(2+) serves as cofactor.

The catalysed reaction is NAD(+) + (deoxyribonucleotide)n-3'-hydroxyl + 5'-phospho-(deoxyribonucleotide)m = (deoxyribonucleotide)n+m + AMP + beta-nicotinamide D-nucleotide.. In terms of biological role, DNA ligase that catalyzes the formation of phosphodiester linkages between 5'-phosphoryl and 3'-hydroxyl groups in double-stranded DNA using NAD as a coenzyme and as the energy source for the reaction. It is essential for DNA replication and repair of damaged DNA. The chain is DNA ligase from Bacillus subtilis (strain 168).